The primary structure comprises 476 residues: Bifunctional protein HldE (476 aa).

A ribokinase region spans residues 1-318; that stretch reads MKVTLPDFRR…ENAIRGRAET (318 aa). An ATP-binding site is contributed by 195 to 198; it reads NLSE. Asp-264 is an active-site residue. Positions 344–476 are cytidylyltransferase; that stretch reads MTNGIFDILH…IIQSIKNGRG (133 aa).

The protein in the N-terminal section; belongs to the carbohydrate kinase PfkB family. This sequence in the C-terminal section; belongs to the cytidylyltransferase family. In terms of assembly, homodimer.

It carries out the reaction D-glycero-beta-D-manno-heptose 7-phosphate + ATP = D-glycero-beta-D-manno-heptose 1,7-bisphosphate + ADP + H(+). The enzyme catalyses D-glycero-beta-D-manno-heptose 1-phosphate + ATP + H(+) = ADP-D-glycero-beta-D-manno-heptose + diphosphate. Its pathway is nucleotide-sugar biosynthesis; ADP-L-glycero-beta-D-manno-heptose biosynthesis; ADP-L-glycero-beta-D-manno-heptose from D-glycero-beta-D-manno-heptose 7-phosphate: step 1/4. It participates in nucleotide-sugar biosynthesis; ADP-L-glycero-beta-D-manno-heptose biosynthesis; ADP-L-glycero-beta-D-manno-heptose from D-glycero-beta-D-manno-heptose 7-phosphate: step 3/4. Its function is as follows. Catalyzes the phosphorylation of D-glycero-D-manno-heptose 7-phosphate at the C-1 position to selectively form D-glycero-beta-D-manno-heptose-1,7-bisphosphate. In terms of biological role, catalyzes the ADP transfer from ATP to D-glycero-beta-D-manno-heptose 1-phosphate, yielding ADP-D-glycero-beta-D-manno-heptose. This chain is Bifunctional protein HldE, found in Yersinia pestis bv. Antiqua (strain Antiqua).